The primary structure comprises 81 residues: Putative CNGA1-overlapping antisense gene protein (81 aa).

In terms of tissue distribution, expressed in brain, notably in regions involved in long-term potentiation and long-term depression, such as hippocampal CA1 and CA3, dentate gyrus and cerebellar Purkinje layer.

The sequence is that of Putative CNGA1-overlapping antisense gene protein from Homo sapiens (Human).